A 341-amino-acid polypeptide reads, in one-letter code: Phenylalanine--tRNA ligase alpha subunit (341 aa).

Glutamate 256 contacts Mg(2+).

Belongs to the class-II aminoacyl-tRNA synthetase family. Phe-tRNA synthetase alpha subunit type 1 subfamily. As to quaternary structure, tetramer of two alpha and two beta subunits. The cofactor is Mg(2+).

It localises to the cytoplasm. It carries out the reaction tRNA(Phe) + L-phenylalanine + ATP = L-phenylalanyl-tRNA(Phe) + AMP + diphosphate + H(+). The sequence is that of Phenylalanine--tRNA ligase alpha subunit from Chlamydia felis (strain Fe/C-56) (Chlamydophila felis).